Reading from the N-terminus, the 82-residue chain is DNA-directed RNA polymerase subunit omega (82 aa).

Belongs to the RNA polymerase subunit omega family. In cyanobacteria the RNAP catalytic core is composed of 2 alpha, 1 beta, 1 beta', 1 gamma and 1 omega subunit. When a sigma factor is associated with the core the holoenzyme is formed, which can initiate transcription.

It catalyses the reaction RNA(n) + a ribonucleoside 5'-triphosphate = RNA(n+1) + diphosphate. In terms of biological role, promotes RNA polymerase assembly. Latches the N- and C-terminal regions of the beta' subunit thereby facilitating its interaction with the beta and alpha subunits. The sequence is that of DNA-directed RNA polymerase subunit omega from Trichodesmium erythraeum (strain IMS101).